We begin with the raw amino-acid sequence, 207 residues long: Guanylate kinase (207 aa).

Residues 17 to 197 (GRLVVLAGPS…SCDELVSLLV (181 aa)) form the Guanylate kinase-like domain. Position 24-31 (24-31 (GPSAVGKS)) interacts with ATP.

This sequence belongs to the guanylate kinase family.

Its subcellular location is the cytoplasm. It carries out the reaction GMP + ATP = GDP + ADP. Its function is as follows. Essential for recycling GMP and indirectly, cGMP. The sequence is that of Guanylate kinase from Rhodococcus jostii (strain RHA1).